The chain runs to 446 residues: Calcium-binding and coiled-coil domain-containing protein 2 (446 aa).

The short motif at 133-136 is the CLIR element; it reads ILVV. The stretch at 137 to 349 forms a coiled coil; the sequence is TTQGEVEEIE…RENSRLLSYM (213 aa). An LIR-like motif is present at residues 203–206; it reads DYWE. Residues 362–390 form a disordered region; it reads TSDEGGARQNPGLAYGNPYSGIQESSSPS. An interaction with LGALS8 region spans residues 371–381; sequence NPGLAYGNPYS. A compositionally biased stretch (polar residues) spans 381 to 390; it reads SGIQESSSPS. Residues 395-446 form an interaction with MYO6 region; the sequence is KKCPICKADDICDHTLEQQQMQPLCFNCPICDKIFPATEKQIFEDHVFCHSL. The UBZ1-type zinc-finger motif lies at 419 to 444; the sequence is CFNCPICDKIFPATEKQIFEDHVFCH. Positions 422, 425, 440, and 444 each coordinate Zn(2+). A Phosphoserine modification is found at S445.

It belongs to the CALCOCO family. As to quaternary structure, dimer. Part of a complex consisting of CALCOCO2, TAX1BP1 and MYO6. Interacts with MYO6. Interacts with GEMIN4. Interacts with ATG8 family members MAP1LC3A, MAP1LC3B, GABARAP, GABARAPL1 and GABARAPL2. Interacts with ATG8 family member MAP1LC3C. Interacts with LGALS8. Interacts with TOM1; the interaction is indirect and is mediated by MYO6, which acts as a bridge between TOM1 and CALCOCO2. Interacts with AZI2. (Microbial infection) Interacts with Lassa virus protein Z. In terms of assembly, (Microbial infection) Interacts with Mopeia virus protein Z. In terms of processing, (Microbial infection) Cleaved by S.pyogenes SpeB protease; leading to its degradation. Degradation by SpeB prevents autophagy, promoting to S.pyogenes intracellular replication. As to expression, expressed in all tissues tested with highest expression in skeletal muscle and lowest in brain.

The protein localises to the cytoplasm. It localises to the perinuclear region. Its subcellular location is the cytoskeleton. The protein resides in the cytoplasmic vesicle. It is found in the autophagosome membrane. Functionally, xenophagy-specific receptor required for autophagy-mediated intracellular bacteria degradation. Acts as an effector protein of galectin-sensed membrane damage that restricts the proliferation of infecting pathogens such as Salmonella typhimurium upon entry into the cytosol by targeting LGALS8-associated bacteria for autophagy. Initially orchestrates bacteria targeting to autophagosomes and subsequently ensures pathogen degradation by regulating pathogen-containing autophagosome maturation. Bacteria targeting to autophagosomes relies on its interaction with MAP1LC3A, MAP1LC3B and/or GABARAPL2, whereas regulation of pathogen-containing autophagosome maturation requires the interaction with MAP3LC3C. May play a role in ruffle formation and actin cytoskeleton organization and seems to negatively regulate constitutive secretion. The sequence is that of Calcium-binding and coiled-coil domain-containing protein 2 (CALCOCO2) from Homo sapiens (Human).